Reading from the N-terminus, the 348-residue chain is Protein lifeguard 1 (348 aa).

Residues M1 to S118 form a disordered region. Over residues Y14–P41 the composition is skewed to pro residues. The segment covering Y42–Y57 has biased composition (low complexity). The segment covering G82–Q101 has biased composition (pro residues). A run of 7 helical transmembrane segments spans residues V142–F162, V174–C194, L205–F225, A230–M250, M260–I280, I284–D304, and F323–I343.

This sequence belongs to the BI1 family. LFG subfamily.

It is found in the membrane. Potential apoptotic regulator. The sequence is that of Protein lifeguard 1 (Grina) from Rattus norvegicus (Rat).